Here is a 321-residue protein sequence, read N- to C-terminus: Lipoyl synthase (321 aa).

C68, C73, C79, C94, C98, C101, and S308 together coordinate [4Fe-4S] cluster. The Radical SAM core domain occupies 80–297 (FNHGTATFMI…KAEALAMGFT (218 aa)).

Belongs to the radical SAM superfamily. Lipoyl synthase family. Requires [4Fe-4S] cluster as cofactor.

Its subcellular location is the cytoplasm. It carries out the reaction [[Fe-S] cluster scaffold protein carrying a second [4Fe-4S](2+) cluster] + N(6)-octanoyl-L-lysyl-[protein] + 2 oxidized [2Fe-2S]-[ferredoxin] + 2 S-adenosyl-L-methionine + 4 H(+) = [[Fe-S] cluster scaffold protein] + N(6)-[(R)-dihydrolipoyl]-L-lysyl-[protein] + 4 Fe(3+) + 2 hydrogen sulfide + 2 5'-deoxyadenosine + 2 L-methionine + 2 reduced [2Fe-2S]-[ferredoxin]. The protein operates within protein modification; protein lipoylation via endogenous pathway; protein N(6)-(lipoyl)lysine from octanoyl-[acyl-carrier-protein]: step 2/2. Functionally, catalyzes the radical-mediated insertion of two sulfur atoms into the C-6 and C-8 positions of the octanoyl moiety bound to the lipoyl domains of lipoate-dependent enzymes, thereby converting the octanoylated domains into lipoylated derivatives. This Salmonella arizonae (strain ATCC BAA-731 / CDC346-86 / RSK2980) protein is Lipoyl synthase.